The chain runs to 201 residues: MAGKSSLFKVILLGDGGVGKSSLMNRYVTNKFDTQLFHTIGVEFLNKDLEVDGHFVTMQIWDTAGQERFRSLRTPFYRGSDCCLLTFSVDDSQSFQNLSNWKKEFIYYADVKEPESFPFVILGNKIDISERQVSTEEAQAWCRDNGDYPYFETSAKDATNVAAAFEEAVRRVLATEDRSDHLIQTDTVSLHRKPKPSSSCC.

Ala2 carries the N-acetylalanine modification. Gly17 is a binding site for GDP. 9 residues coordinate GTP: Gly17, Val18, Gly19, Lys20, Ser21, Ser22, Thr34, His38, and Thr39. The GDP site is built by Gly19, Lys20, Ser21, and Ser22. Residue Ser21 coordinates Mg(2+). The Switch 1 motif lies at Lys31–Val42. Mg(2+)-binding residues include Thr39 and Asp62. The short motif at Ala64–Arg78 is the Switch 2 element. GTP is bound by residues Gly65, Asn124, Lys125, and Asp127. 5 residues coordinate GDP: Asn124, Lys125, Asp127, Ala155, and Lys156. Residue Lys156 participates in GTP binding. A Phosphoserine modification is found at Ser179. Thr187 carries the post-translational modification Phosphothreonine. Residues Cys200 and Cys201 are each lipidated (S-geranylgeranyl cysteine).

It belongs to the small GTPase superfamily. Rab family. As to quaternary structure, interacts (preferentially in its GTP-bound form) with GCC2 (via its GRIP domain). Interacts (GTP-bound form) with SGSM1; the GDP-bound form has much lower affinity for SGSM1. Interacts with SGSM2. The GTP-bound form but not the GDP-bound form interacts with HPS4 and the BLOC-3 complex (heterodimer of HPS1 and HPS4) but does not interact with HPS1 alone. Interacts (GTP-bound form) with NDE1; two RAB9A-GTP molecules lie on the opposite sides of the NDE1 homodimer; the interaction leads to RAB9A-dynein motor tethering. Interacts (GTP-bound form) with NDEL1. The cofactor is Mg(2+).

It is found in the cell membrane. It localises to the endoplasmic reticulum membrane. The protein resides in the golgi apparatus membrane. The protein localises to the late endosome. Its subcellular location is the cytoplasmic vesicle. It is found in the phagosome membrane. It localises to the phagosome. The protein resides in the cytoplasmic vesicle membrane. The protein localises to the melanosome. The catalysed reaction is GTP + H2O = GDP + phosphate + H(+). With respect to regulation, regulated by guanine nucleotide exchange factors (GEFs) which promote the exchange of bound GDP for free GTP. Regulated by GTPase activating proteins (GAPs) which increase the GTP hydrolysis activity. Inhibited by GDP dissociation inhibitors (GDIs). Its function is as follows. The small GTPases Rab are key regulators of intracellular membrane trafficking, from the formation of transport vesicles to their fusion with membranes. Rabs cycle between an inactive GDP-bound form and an active GTP-bound form that is able to recruit to membranes different sets of downstream effectors directly responsible for vesicle formation, movement, tethering and fusion. RAB9A is involved in the transport of proteins between the endosomes and the trans-Golgi network (TGN). Specifically uses NDE1/NDEL1 as an effector to interact with the dynein motor complex in order to control retrograde trafficking of RAB9-associated late endosomes to the TGN. Involved in the recruitment of SGSM2 to melanosomes and is required for the proper trafficking of melanogenic enzymes TYR, TYRP1 and DCT/TYRP2 to melanosomes in melanocytes. This chain is Ras-related protein Rab-9A (RAB9A), found in Canis lupus familiaris (Dog).